We begin with the raw amino-acid sequence, 21 residues long: 71 kDa F-actin-binding protein (21 aa).

This sequence to yeast fimbrin. The N-terminus is blocked.

Its function is as follows. Binds directly to F-actin and induces actin filament bundling. May function as a regulator of actin filament organization. The protein is 71 kDa F-actin-binding protein of Tetrahymena pyriformis.